A 91-amino-acid chain; its full sequence is Cell division topological specificity factor (91 aa).

Belongs to the MinE family.

Functionally, prevents the cell division inhibition by proteins MinC and MinD at internal division sites while permitting inhibition at polar sites. This ensures cell division at the proper site by restricting the formation of a division septum at the midpoint of the long axis of the cell. This chain is Cell division topological specificity factor, found in Wigglesworthia glossinidia brevipalpis.